Here is a 374-residue protein sequence, read N- to C-terminus: Glutamate 5-kinase (374 aa).

Lys9 is an ATP binding site. Ser49, Asp136, and Asn148 together coordinate substrate. ATP contacts are provided by residues 168 to 169 (TD) and 210 to 216 (TGGMKSK). The region spanning 276–354 (SGVVRIDQGA…DEAKQLIPLV (79 aa)) is the PUA domain.

Belongs to the glutamate 5-kinase family.

The protein localises to the cytoplasm. The enzyme catalyses L-glutamate + ATP = L-glutamyl 5-phosphate + ADP. Its pathway is amino-acid biosynthesis; L-proline biosynthesis; L-glutamate 5-semialdehyde from L-glutamate: step 1/2. Functionally, catalyzes the transfer of a phosphate group to glutamate to form L-glutamate 5-phosphate. The sequence is that of Glutamate 5-kinase from Halalkalibacterium halodurans (strain ATCC BAA-125 / DSM 18197 / FERM 7344 / JCM 9153 / C-125) (Bacillus halodurans).